Reading from the N-terminus, the 227-residue chain is 2,3-bisphosphoglycerate-dependent phosphoglycerate mutase (227 aa).

Substrate-binding positions include R7–N14, T20–G21, R59, E86–Y89, K97, R113–R114, and G182–N183. H8 serves as the catalytic Tele-phosphohistidine intermediate. The active-site Proton donor/acceptor is the E86.

It belongs to the phosphoglycerate mutase family. BPG-dependent PGAM subfamily. In terms of assembly, homodimer.

The enzyme catalyses (2R)-2-phosphoglycerate = (2R)-3-phosphoglycerate. It functions in the pathway carbohydrate degradation; glycolysis; pyruvate from D-glyceraldehyde 3-phosphate: step 3/5. Catalyzes the interconversion of 2-phosphoglycerate and 3-phosphoglycerate. The protein is 2,3-bisphosphoglycerate-dependent phosphoglycerate mutase of Mannheimia succiniciproducens (strain KCTC 0769BP / MBEL55E).